Consider the following 205-residue polypeptide: Max-like protein homolog 2 (205 aa).

Composition is skewed to low complexity over residues 1–12 (MSRSRSAAASSS) and 26–40 (SASS…ATNS). Positions 1 to 58 (MSRSRSAAASSSQKPDDMDLMSPDGSASSPSAPNTPATNSGGFSSDRKKATHLRCERQ) are disordered. Positions 45 to 58 (SDRKKATHLRCERQ) are enriched in basic and acidic residues. Positions 47-60 (RKKATHLRCERQRR) are basic motif. In terms of domain architecture, bHLH spans 47-101 (RKKATHLRCERQRREAINSGYSDLKDLIPQTTTSLGCKTTNAAILFRACDFMSQL). Residues 61–101 (EAINSGYSDLKDLIPQTTTSLGCKTTNAAILFRACDFMSQL) form a helix-loop-helix motif region. Residues 98-132 (MSQLKTDISDADKQLAQLNAQAAALEMIASEYEQM) are a coiled coil.

As to expression, widely expressed.

Its subcellular location is the nucleus. The protein localises to the cytoplasm. It localises to the mitochondrion. Functionally, transcription factor. Binds to the E box motif 5'-CACGTG-3', probably in a heterodimeric complex with mml-1. Involved in modulating longevity in response to TOR signaling, dietary restriction, the decline in protein homeostasis associated with normal aging, germline signaling and the insulin-like signaling pathway. Plays a role in autophagy. Involved in regulating migration of the ray 1 precursor cells in the male tail, acting in concert with Wnt and semaphorin signaling pathways. Regulates transcription of genes encoding extracellular matrix (ECM) components which may contribute to the substratum required for migration of the neighboring ray 1 precursor cells. Required for resistance to oxidative stress. Involved in promoting infection by the microsporidian pathogen N.parisii, probably acting independently of its canonical partner, mml-1. The polypeptide is Max-like protein homolog 2 (Caenorhabditis elegans).